We begin with the raw amino-acid sequence, 211 residues long: MSDPDRARVLAAAGVSRETAERLDLYVAQLRRWQPIKNLVGPATLTEVWSRHIDDALQLLDLAPEARTWLDLGSGAGIPGLILAIAGRERGVRVDLVESNARKCAFLTETARLTEAPARVRNARIEAVIGEYGGTDVVCARALAPMTQLLAWTEPLLKTGTTGLFPKGRDVQAELTQAGAQWRVVNDLVPSRTDSEARIVRVTALAAPSHR.

Residues Gly73, 125–126 (IE), and Arg141 contribute to the S-adenosyl-L-methionine site.

This sequence belongs to the methyltransferase superfamily. RNA methyltransferase RsmG family.

Its subcellular location is the cytoplasm. It carries out the reaction guanosine(527) in 16S rRNA + S-adenosyl-L-methionine = N(7)-methylguanosine(527) in 16S rRNA + S-adenosyl-L-homocysteine. Functionally, specifically methylates the N7 position of guanine in position 527 of 16S rRNA. This chain is Ribosomal RNA small subunit methyltransferase G, found in Methylobacterium radiotolerans (strain ATCC 27329 / DSM 1819 / JCM 2831 / NBRC 15690 / NCIMB 10815 / 0-1).